Reading from the N-terminus, the 368-residue chain is Phosphate acyltransferase (368 aa).

This sequence belongs to the PlsX family. As to quaternary structure, homodimer. Probably interacts with PlsY.

The protein localises to the cytoplasm. The catalysed reaction is a fatty acyl-[ACP] + phosphate = an acyl phosphate + holo-[ACP]. It participates in lipid metabolism; phospholipid metabolism. Catalyzes the reversible formation of acyl-phosphate (acyl-PO(4)) from acyl-[acyl-carrier-protein] (acyl-ACP). This enzyme utilizes acyl-ACP as fatty acyl donor, but not acyl-CoA. This is Phosphate acyltransferase from Cereibacter sphaeroides (strain ATCC 17025 / ATH 2.4.3) (Rhodobacter sphaeroides).